A 132-amino-acid polypeptide reads, in one-letter code: ATP synthase epsilon chain (132 aa).

It belongs to the ATPase epsilon chain family. F-type ATPases have 2 components, CF(1) - the catalytic core - and CF(0) - the membrane proton channel. CF(1) has five subunits: alpha(3), beta(3), gamma(1), delta(1), epsilon(1). CF(0) has three main subunits: a, b and c.

It localises to the cell membrane. In terms of biological role, produces ATP from ADP in the presence of a proton gradient across the membrane. The polypeptide is ATP synthase epsilon chain (atpC) (Bacillus caldotenax).